We begin with the raw amino-acid sequence, 120 residues long: Large ribosomal subunit protein bL20 (120 aa).

It belongs to the bacterial ribosomal protein bL20 family.

Functionally, binds directly to 23S ribosomal RNA and is necessary for the in vitro assembly process of the 50S ribosomal subunit. It is not involved in the protein synthesizing functions of that subunit. This Methylobacillus flagellatus (strain ATCC 51484 / DSM 6875 / VKM B-1610 / KT) protein is Large ribosomal subunit protein bL20.